Reading from the N-terminus, the 356-residue chain is GDP-mannose:di-myo-inositol-1,3'-phosphate beta-1,2-mannosyltransferase (356 aa).

This sequence belongs to the MDIP synthase family. The cofactor is Mg(2+).

It carries out the reaction bis(myo-inositol) 1,3'-phosphate + GDP-alpha-D-mannose = 2-O-(beta-D-mannosyl)-bis(myo-inositol) 1,3'-phosphate + GDP + H(+). It catalyses the reaction 2-O-(beta-D-mannosyl)-bis(myo-inositol) 1,3'-phosphate + GDP-alpha-D-mannose = 2-O-(beta-D-mannosyl-(1-&gt;2)-beta-D-mannosyl)-bis(myo-inositol) 1,3'-phosphate + GDP + H(+). The enzyme catalyses bis(myo-inositol) 1,3'-phosphate + 2 GDP-alpha-D-mannose = 2-O-(beta-D-mannosyl-(1-&gt;2)-beta-D-mannosyl)-bis(myo-inositol) 1,3'-phosphate + 2 GDP + 2 H(+). Its function is as follows. Catalyzes the transfer of the mannosyl group from GDP-mannose to di-myo-inositol-1,3'-phosphate (DIP), producing mannosyl-di-myo-inositol phosphate (MDIP). Can also use MDIP as an acceptor of a second mannose residue, yielding di-mannosyl-di-myo-inositol phosphate (MMDIP). Minor amounts of the tri-mannosylated form are also formed. The chain is GDP-mannose:di-myo-inositol-1,3'-phosphate beta-1,2-mannosyltransferase from Thermotoga maritima (strain ATCC 43589 / DSM 3109 / JCM 10099 / NBRC 100826 / MSB8).